Here is a 235-residue protein sequence, read N- to C-terminus: RING-H2 finger protein ATL33 (235 aa).

Residues 64 to 84 (LIFVVIAFVAVPALVYALFFN) traverse the membrane as a helical segment. The tract at residues 87 to 133 (CSSSRRNSSSSRTSSSSDDTPHATVDTPPITETTVTSESGGKFHKDT) is disordered. The span at 88–103 (SSSRRNSSSSRTSSSS) shows a compositional bias: low complexity. A compositionally biased stretch (polar residues) spans 116 to 125 (ITETTVTSES). An RING-type; atypical zinc finger spans residues 142-184 (CSVCLMVFTDSDELRQLSECKHAFHVLCIETWLKDHPNCPICR). Residues 201–216 (NVNGNVNRSGGNRRVS) show a composition bias toward low complexity. Residues 201–235 (NVNGNVNRSGGNRRVSATSRDDDWRQGLPDASSLV) are disordered.

Belongs to the RING-type zinc finger family. ATL subfamily.

It is found in the membrane. The enzyme catalyses S-ubiquitinyl-[E2 ubiquitin-conjugating enzyme]-L-cysteine + [acceptor protein]-L-lysine = [E2 ubiquitin-conjugating enzyme]-L-cysteine + N(6)-ubiquitinyl-[acceptor protein]-L-lysine.. Its pathway is protein modification; protein ubiquitination. This is RING-H2 finger protein ATL33 (ATL33) from Arabidopsis thaliana (Mouse-ear cress).